The primary structure comprises 283 residues: Bifunctional protein FolD (283 aa).

NADP(+) contacts are provided by residues 165–167, serine 190, and isoleucine 231; that span reads GAS.

The protein belongs to the tetrahydrofolate dehydrogenase/cyclohydrolase family. As to quaternary structure, homodimer.

It carries out the reaction (6R)-5,10-methylene-5,6,7,8-tetrahydrofolate + NADP(+) = (6R)-5,10-methenyltetrahydrofolate + NADPH. It catalyses the reaction (6R)-5,10-methenyltetrahydrofolate + H2O = (6R)-10-formyltetrahydrofolate + H(+). It functions in the pathway one-carbon metabolism; tetrahydrofolate interconversion. Functionally, catalyzes the oxidation of 5,10-methylenetetrahydrofolate to 5,10-methenyltetrahydrofolate and then the hydrolysis of 5,10-methenyltetrahydrofolate to 10-formyltetrahydrofolate. The protein is Bifunctional protein FolD of Bordetella bronchiseptica (strain ATCC BAA-588 / NCTC 13252 / RB50) (Alcaligenes bronchisepticus).